The following is a 182-amino-acid chain: Isopentenyl-diphosphate Delta-isomerase (182 aa).

His25 and His32 together coordinate Mn(2+). Residues Leu30–Met164 form the Nudix hydrolase domain. The active site involves Cys67. His69 contacts Mn(2+). Residue Glu87 participates in Mg(2+) binding. Mn(2+) contacts are provided by Glu114 and Glu116. Glu116 is a catalytic residue.

Belongs to the IPP isomerase type 1 family. Homodimer. It depends on Mg(2+) as a cofactor. Mn(2+) is required as a cofactor.

It localises to the cytoplasm. The enzyme catalyses isopentenyl diphosphate = dimethylallyl diphosphate. Its pathway is isoprenoid biosynthesis; dimethylallyl diphosphate biosynthesis; dimethylallyl diphosphate from isopentenyl diphosphate: step 1/1. Its function is as follows. Catalyzes the 1,3-allylic rearrangement of the homoallylic substrate isopentenyl (IPP) to its highly electrophilic allylic isomer, dimethylallyl diphosphate (DMAPP). The chain is Isopentenyl-diphosphate Delta-isomerase from Shigella flexneri serotype 5b (strain 8401).